Consider the following 568-residue polypeptide: Urease subunit beta (568 aa).

The Urease domain maps to 131–568 (GGIDTHIHFI…LSLAQLYNLF (438 aa)). His-136, His-138, and Lys-219 together coordinate Ni(2+). An N6-carboxylysine modification is found at Lys-219. Position 221 (His-221) interacts with substrate. 2 residues coordinate Ni(2+): His-248 and His-274. The active-site Proton donor is the His-321. Asp-361 contributes to the Ni(2+) binding site.

This sequence belongs to the metallo-dependent hydrolases superfamily. Urease alpha subunit family. As to quaternary structure, heterohexamer of 3 UreA (alpha) and 3 UreB (beta) subunits. It depends on Ni cation as a cofactor. Carboxylation allows a single lysine to coordinate two nickel ions.

It is found in the cytoplasm. The catalysed reaction is urea + 2 H2O + H(+) = hydrogencarbonate + 2 NH4(+). It functions in the pathway nitrogen metabolism; urea degradation; CO(2) and NH(3) from urea (urease route): step 1/1. The chain is Urease subunit beta from Helicobacter heilmannii.